Reading from the N-terminus, the 644-residue chain is uncharacterized protein (644 aa).

The interval 65–117 is disordered; sequence DSDVETTGGGGRGSTTSTEDRIDEHDDAIEDDGVSNEEDENQDAEQEQEVDLN. A compositionally biased stretch (acidic residues) spans 89-114; the sequence is HDDAIEDDGVSNEEDENQDAEQEQEV.

This is an uncharacterized protein from Arabidopsis thaliana (Mouse-ear cress).